The sequence spans 555 residues: Formate--tetrahydrofolate ligase (555 aa).

65–72 (TPAGEGKS) contributes to the ATP binding site.

Belongs to the formate--tetrahydrofolate ligase family.

The catalysed reaction is (6S)-5,6,7,8-tetrahydrofolate + formate + ATP = (6R)-10-formyltetrahydrofolate + ADP + phosphate. It participates in one-carbon metabolism; tetrahydrofolate interconversion. The protein is Formate--tetrahydrofolate ligase of Staphylococcus aureus (strain bovine RF122 / ET3-1).